We begin with the raw amino-acid sequence, 1124 residues long: uncharacterized protein (1124 aa).

Positions 1–28 (MALFPRSILIALVLSFVLNLGLVTKIHA) are cleaved as a signal peptide. 7 consecutive transmembrane segments (helical) span residues 332–352 (IVTAFLTLYVMFFGFKLLLAG), 359–379 (EYINFILKIIFVTYFSIGINI), 393–413 (MIQWAFPFLLNGINGLASWVM), 495–515 (MLVSLALSYPLLVISVAAFMV), 522–542 (MISIVILGILAPLFVPMFLFA), 555–575 (MISFLLQPMVVVTFMITMFAV), and 700–720 (IKNILLALVTACFTLYLMYNF).

Belongs to the TrbL/VirB6 family.

It localises to the cell membrane. This is an uncharacterized protein from Rickettsia prowazekii (strain Madrid E).